Reading from the N-terminus, the 178-residue chain is Translation initiation factor IF-3 (178 aa).

Belongs to the IF-3 family. In terms of assembly, monomer.

The protein resides in the cytoplasm. Functionally, IF-3 binds to the 30S ribosomal subunit and shifts the equilibrium between 70S ribosomes and their 50S and 30S subunits in favor of the free subunits, thus enhancing the availability of 30S subunits on which protein synthesis initiation begins. The chain is Translation initiation factor IF-3 from Macrococcus caseolyticus (strain JCSC5402) (Macrococcoides caseolyticum).